Reading from the N-terminus, the 317-residue chain is Protein-methionine-sulfoxide reductase catalytic subunit MsrP (317 aa).

The tat-type signal signal peptide spans 1–40; the sequence is MKKLTSNDVTPEEIFYQRRKIIKAFGLSAVATALPTFSFA. Mo-molybdopterin contacts are provided by residues asparagine 71, 74–75, cysteine 129, threonine 164, asparagine 216, arginine 221, and 232–234; these read YE and SIK.

The protein belongs to the MsrP family. As to quaternary structure, heterodimer of a catalytic subunit (MsrP) and a heme-binding subunit (MsrQ). The cofactor is Mo-molybdopterin. In terms of processing, predicted to be exported by the Tat system. The position of the signal peptide cleavage has not been experimentally proven.

The protein localises to the periplasm. The catalysed reaction is L-methionyl-[protein] + a quinone + H2O = L-methionyl-(S)-S-oxide-[protein] + a quinol. It catalyses the reaction L-methionyl-[protein] + a quinone + H2O = L-methionyl-(R)-S-oxide-[protein] + a quinol. In terms of biological role, part of the MsrPQ system that repairs oxidized periplasmic proteins containing methionine sulfoxide residues (Met-O), using respiratory chain electrons. Thus protects these proteins from oxidative-stress damage caused by reactive species of oxygen and chlorine generated by the host defense mechanisms. MsrPQ is essential for the maintenance of envelope integrity under bleach stress, rescuing a wide series of structurally unrelated periplasmic proteins from methionine oxidation. The catalytic subunit MsrP is non-stereospecific, being able to reduce both (R-) and (S-) diastereoisomers of methionine sulfoxide. This chain is Protein-methionine-sulfoxide reductase catalytic subunit MsrP, found in Histophilus somni (strain 2336) (Haemophilus somnus).